The primary structure comprises 465 residues: 3-isopropylmalate dehydratase large subunit (465 aa).

[4Fe-4S] cluster-binding residues include cysteine 347, cysteine 407, and cysteine 410.

Belongs to the aconitase/IPM isomerase family. LeuC type 1 subfamily. In terms of assembly, heterodimer of LeuC and LeuD. [4Fe-4S] cluster serves as cofactor.

The enzyme catalyses (2R,3S)-3-isopropylmalate = (2S)-2-isopropylmalate. It participates in amino-acid biosynthesis; L-leucine biosynthesis; L-leucine from 3-methyl-2-oxobutanoate: step 2/4. Catalyzes the isomerization between 2-isopropylmalate and 3-isopropylmalate, via the formation of 2-isopropylmaleate. This chain is 3-isopropylmalate dehydratase large subunit, found in Buchnera aphidicola subsp. Pemphigus spyrothecae.